A 378-amino-acid polypeptide reads, in one-letter code: DNA replication and repair protein RecF (378 aa).

30-37 (GRNGQGKT) lines the ATP pocket.

It belongs to the RecF family.

The protein localises to the cytoplasm. The RecF protein is involved in DNA metabolism; it is required for DNA replication and normal SOS inducibility. RecF binds preferentially to single-stranded, linear DNA. It also seems to bind ATP. The protein is DNA replication and repair protein RecF of Frankia alni (strain DSM 45986 / CECT 9034 / ACN14a).